The primary structure comprises 397 residues: Putative gustatory receptor 93c (397 aa).

Residues 1-12 are Cytoplasmic-facing; the sequence is MIERLKKVSLPA. A helical transmembrane segment spans residues 13–33; the sequence is LSAFILFCSCHYGRILGVICF. The Extracellular segment spans residues 34 to 87; sequence DIGQRTSDDSLVVRNRHQFKWFCLSCRLISVTAVCCFCAPYVADIEDPYERLLQ. The helical transmembrane segment at 88 to 108 threads the bilayer; sequence CFRLSASLICGICIIVVQVCY. At 109-141 the chain is on the cytoplasmic side; the sequence is EKELLRMIISFLRLFRRVRRLSSLKRIGFGGKR. A helical membrane pass occupies residues 142 to 162; it reads EFFLLLFKFICLVYELYSEIC. The Extracellular segment spans residues 163–179; sequence QLWHLPDSLSLFATLCE. A helical transmembrane segment spans residues 180 to 200; the sequence is IFLEIGSLMIIHIGFVGYLSV. Topologically, residues 201–266 are cytoplasmic; that stretch reads AALYSEVNSF…RTFHRLLELP (66 aa). Residues 267–287 traverse the membrane as a helical segment; the sequence is VLIILLGKIFATTILSYEVII. The Extracellular portion of the chain corresponds to 288–295; sequence RPELYARK. The chain crosses the membrane as a helical span at residues 296–316; sequence IGMWGLVVKSFADVILLTLAV. Residues 317–371 lie on the Cytoplasmic side of the membrane; that stretch reads HEAVSSSRMMRRLSLENFPITDHKAWHMKWEMFLSRLNFFEFRVRPLGLFEVSNE. Residues 372 to 392 traverse the membrane as a helical segment; sequence VILLFLSSMITYFTYVVQYGI. Topologically, residues 393-397 are extracellular; the sequence is QTNRL.

The protein belongs to the insect chemoreceptor superfamily. Gustatory receptor (GR) family. Gr93a subfamily. As to expression, in larvae, is expressed in neurons of the posterior pharyngeal sense organ.

The protein resides in the cell membrane. Its function is as follows. Probable gustatory receptor which mediates acceptance or avoidance behavior, depending on its substrates. The protein is Putative gustatory receptor 93c (Gr93c) of Drosophila melanogaster (Fruit fly).